A 305-amino-acid polypeptide reads, in one-letter code: Putative lipid kinase SAS0691 (305 aa).

The DAGKc domain maps to 3–139 (NKYTHGVLFY…YDVIKINNQY (137 aa)). Residues S44, 74-80 (GDGTVNE), and T101 each bind ATP. The Mg(2+) site is built by S220, D223, and E225. E281 serves as the catalytic Proton acceptor.

The protein belongs to the diacylglycerol/lipid kinase family. The cofactor is Mg(2+).

Functionally, may catalyze the ATP-dependent phosphorylation of lipids other than diacylglycerol (DAG). This Staphylococcus aureus (strain MSSA476) protein is Putative lipid kinase SAS0691.